Reading from the N-terminus, the 104-residue chain is uncharacterized protein (104 aa).

In terms of domain architecture, HIT spans 3–104 (VFEKIIQGEI…HFHILSGDKH (102 aa)). The short motif at 93-97 (HLHFH) is the Histidine triad motif element.

This is an uncharacterized protein from Helicobacter pylori (strain J99 / ATCC 700824) (Campylobacter pylori J99).